Here is a 313-residue protein sequence, read N- to C-terminus: Ribosomal RNA small subunit methyltransferase H (313 aa).

S-adenosyl-L-methionine contacts are provided by residues 35 to 37, Asp-55, Phe-80, Asp-102, and Gln-109; that span reads GGH.

This sequence belongs to the methyltransferase superfamily. RsmH family.

It is found in the cytoplasm. It catalyses the reaction cytidine(1402) in 16S rRNA + S-adenosyl-L-methionine = N(4)-methylcytidine(1402) in 16S rRNA + S-adenosyl-L-homocysteine + H(+). Functionally, specifically methylates the N4 position of cytidine in position 1402 (C1402) of 16S rRNA. The protein is Ribosomal RNA small subunit methyltransferase H of Shewanella amazonensis (strain ATCC BAA-1098 / SB2B).